Consider the following 222-residue polypeptide: 25 kDa elongation factor 1-beta (222 aa).

The span at 75–94 (TSASAPAKQAPKKAASAPAK) shows a compositional bias: low complexity. The segment at 75 to 98 (TSASAPAKQAPKKAASAPAKQADE) is disordered.

It belongs to the EF-1-beta/EF-1-delta family. As to quaternary structure, EF-1 is composed of 4 subunits: alpha, beta, delta, and gamma.

Its function is as follows. EF-1-beta and EF-1-delta stimulate the exchange of GDP bound to EF-1-alpha to GTP. This is 25 kDa elongation factor 1-beta from Trypanosoma cruzi.